The sequence spans 293 residues: Protein nud-2 (293 aa).

A coiled-coil region spans residues 36–147; the sequence is EIEKMMDSEL…EKIAMLESEL (112 aa). Residues 239–293 form a required for interaction with unc-83 isoform c region; sequence KSQRVSTGTGAGACINRIVKDLMTKVERLDSILSTIRVSNNSSNNNSSHLTTTRA.

It belongs to the nudE family. Component of a dynein-regulating complex composed of at least lis-1 and nud-2. Interacts with lis-1; the interaction is direct. Interacts (via C-terminus) with unc-83; the interaction is direct, and is required for recruitment of nud-2 to the nuclear envelope. As to expression, expressed in ventral cord neurons, the pharynx, seam cells of the hypodermis and in vulval muscle cells.

The protein resides in the nucleus envelope. Part of a complex with lis-1, which is recruited to the nuclear envelope by unc-83, where, in turn, it recruits dynein to the nuclear surface and regulates nuclear migration in hypodermal precursor cells. Plays a role in GABAergic synaptic vesicle localization in the ventral nerve cord. The polypeptide is Protein nud-2 (Caenorhabditis elegans).